A 122-amino-acid chain; its full sequence is MIQQESRLKVADNTGAKEILCIRVLGGSSRRYAGIGDVIVATVKDAIPGGNVKRGDVVKAVVVRTAKERRRADGSYIKFDENAAVIIKNDNDPRGTRIFGPVGRELREKKFMKIVSLAPEVL.

This sequence belongs to the universal ribosomal protein uL14 family. Part of the 50S ribosomal subunit. Forms a cluster with proteins L3 and L19. In the 70S ribosome, L14 and L19 interact and together make contacts with the 16S rRNA in bridges B5 and B8.

Binds to 23S rRNA. Forms part of two intersubunit bridges in the 70S ribosome. The chain is Large ribosomal subunit protein uL14 from Mycolicibacterium vanbaalenii (strain DSM 7251 / JCM 13017 / BCRC 16820 / KCTC 9966 / NRRL B-24157 / PYR-1) (Mycobacterium vanbaalenii).